A 230-amino-acid polypeptide reads, in one-letter code: uncharacterized protein (230 aa).

Residues 1–57 (MPGPHSPNPGVGTNGPAPYPEPSSHEPQALDYPHDLGAAEPAFAPGPADDAALPPAA) form a disordered region. Positions 38–55 (AAEPAFAPGPADDAALPP) are enriched in low complexity. The helical transmembrane segment at 75–95 (LLIGIVVALALVSAMTAAIIY) threads the bilayer.

It localises to the membrane. This is an uncharacterized protein from Mycobacterium tuberculosis (strain CDC 1551 / Oshkosh).